A 415-amino-acid polypeptide reads, in one-letter code: Tyrosine--tRNA ligase (415 aa).

Tyrosine 34 contacts L-tyrosine. The 'HIGH' region motif lies at 39–48 (PTSDSLTVGH). Positions 164 and 168 each coordinate L-tyrosine. A 'KMSKS' region motif is present at residues 225–229 (KFGKS). ATP is bound at residue lysine 228. Residues 348 to 414 (IPLSEALVKT…GKKNNSLIIL (67 aa)) form the S4 RNA-binding domain.

Belongs to the class-I aminoacyl-tRNA synthetase family. TyrS type 1 subfamily. In terms of assembly, homodimer.

It localises to the cytoplasm. It carries out the reaction tRNA(Tyr) + L-tyrosine + ATP = L-tyrosyl-tRNA(Tyr) + AMP + diphosphate + H(+). Catalyzes the attachment of tyrosine to tRNA(Tyr) in a two-step reaction: tyrosine is first activated by ATP to form Tyr-AMP and then transferred to the acceptor end of tRNA(Tyr). The sequence is that of Tyrosine--tRNA ligase from Phytoplasma australiense.